We begin with the raw amino-acid sequence, 1026 residues long: Contactin-4 (1026 aa).

The signal sequence occupies residues Met-1–Ala-18. Ig-like C2-type domains are found at residues Pro-32–Gln-117, Glu-122–Leu-206, Pro-225–Thr-311, Pro-316–Ser-400, Pro-406–Val-493, and Pro-497–Ser-586. Intrachain disulfides connect Cys-50-Cys-100, Cys-144-Cys-194, Cys-247-Cys-295, Cys-337-Cys-384, Cys-429-Cys-477, and Cys-519-Cys-576. N-linked (GlcNAc...) asparagine glycans are attached at residues Asn-65, Asn-90, and Asn-191. Residues Asn-370, Asn-375, and Asn-466 are each glycosylated (N-linked (GlcNAc...) asparagine). 4 consecutive Fibronectin type-III domains span residues Pro-599–Ala-697, Thr-702–Glu-799, Pro-804–Pro-899, and Pro-900–Ser-995. Residues Pro-685–Gly-710 form a disordered region. Over residues Arg-687–Glu-696 the composition is skewed to basic and acidic residues. 7 N-linked (GlcNAc...) asparagine glycosylation sites follow: Asn-705, Asn-764, Asn-858, Asn-893, Asn-911, Asn-929, and Asn-954. Ser-1000 carries GPI-anchor amidated serine lipidation. A propeptide spans Gly-1001 to Leu-1026 (removed in mature form).

It belongs to the immunoglobulin superfamily. Contactin family. In terms of assembly, interacts with PTPRG. Specifically expressed in the nervous system. Not expressed in heart, spleen, lung, liver, kidney or skeletal muscle. In the hippocampus, it is highly expressed in CA1 pyramidal cells and weakly expressed in other regions of the hippocampus.

The protein localises to the cell membrane. Its subcellular location is the secreted. In terms of biological role, contactins mediate cell surface interactions during nervous system development. Has some neurite outgrowth-promoting activity. May be involved in synaptogenesis. This Rattus norvegicus (Rat) protein is Contactin-4 (Cntn4).